A 430-amino-acid polypeptide reads, in one-letter code: Long-chain specific acyl-CoA dehydrogenase, mitochondrial (430 aa).

Residues 1–30 (MAARLLLRSLRVLKARSAPRPPPSARCSHS) constitute a mitochondrion transit peptide. Residues 17-39 (SAPRPPPSARCSHSGAEARLETP) are disordered. K42 is modified (N6-acetyllysine). Phosphoserine is present on residues S54 and S55. An N6-acetyllysine; alternate mark is found at K66 and K81. N6-succinyllysine; alternate occurs at positions 66 and 81. N6-acetyllysine is present on residues K92 and K95. An N6-succinyllysine modification is found at K165. 170 to 179 (IAMTEPGAGS) lines the FAD pocket. S179 serves as a coordination point for substrate. Residue S191 is modified to Phosphoserine. 203-205 (FIT) lines the FAD pocket. Substrate is bound at residue 227–228 (AH). N6-succinyllysine is present on K240. An N6-acetyllysine; alternate mark is found at K254 and K279. 2 positions are modified to N6-succinyllysine; alternate: K254 and K279. Residues Y282 and 289-292 (PQER) each bind substrate. Residue E291 is the Proton acceptor of the active site. R317 contacts FAD. K318 bears the N6-acetyllysine mark. At K322 the chain carries N6-acetyllysine; alternate. The residue at position 322 (K322) is an N6-succinyllysine; alternate. An FAD-binding site is contributed by Q328. Residue K358 is modified to N6-acetyllysine. At S362 the chain carries Phosphoserine. 385–389 (QLHGG) is an FAD binding site. 412 to 413 (GG) contributes to the substrate binding site. 414–416 (TNE) is an FAD binding site.

It belongs to the acyl-CoA dehydrogenase family. As to quaternary structure, homotetramer. Requires FAD as cofactor. Post-translationally, acetylation at Lys-318 and Lys-322 in proximity of the cofactor-binding sites strongly reduces catalytic activity. These sites are deacetylated by SIRT3. Expressed in heart, skeletal muscle, kidney, and brain. Expressed in liver (at protein level).

The protein resides in the mitochondrion matrix. It catalyses the reaction a long-chain 2,3-saturated fatty acyl-CoA + oxidized [electron-transfer flavoprotein] + H(+) = a long-chain (2E)-enoyl-CoA + reduced [electron-transfer flavoprotein]. The enzyme catalyses oxidized [electron-transfer flavoprotein] + hexadecanoyl-CoA + H(+) = (2E)-hexadecenoyl-CoA + reduced [electron-transfer flavoprotein]. The catalysed reaction is hexanoyl-CoA + oxidized [electron-transfer flavoprotein] + H(+) = (2E)-hexenoyl-CoA + reduced [electron-transfer flavoprotein]. It carries out the reaction octanoyl-CoA + oxidized [electron-transfer flavoprotein] + H(+) = (2E)-octenoyl-CoA + reduced [electron-transfer flavoprotein]. It catalyses the reaction decanoyl-CoA + oxidized [electron-transfer flavoprotein] + H(+) = (2E)-decenoyl-CoA + reduced [electron-transfer flavoprotein]. The enzyme catalyses dodecanoyl-CoA + oxidized [electron-transfer flavoprotein] + H(+) = (2E)-dodecenoyl-CoA + reduced [electron-transfer flavoprotein]. The catalysed reaction is tetradecanoyl-CoA + oxidized [electron-transfer flavoprotein] + H(+) = (2E)-tetradecenoyl-CoA + reduced [electron-transfer flavoprotein]. It carries out the reaction octadecanoyl-CoA + oxidized [electron-transfer flavoprotein] + H(+) = (2E)-octadecenoyl-CoA + reduced [electron-transfer flavoprotein]. It catalyses the reaction eicosanoyl-CoA + oxidized [electron-transfer flavoprotein] + H(+) = (2E)-eicosenoyl-CoA + reduced [electron-transfer flavoprotein]. The enzyme catalyses docosanoyl-CoA + oxidized [electron-transfer flavoprotein] + H(+) = (2E)-docosenoyl-CoA + reduced [electron-transfer flavoprotein]. The catalysed reaction is tetracosanoyl-CoA + oxidized [electron-transfer flavoprotein] + H(+) = (2E)-tetracosenoyl-CoA + reduced [electron-transfer flavoprotein]. It carries out the reaction (5E)-tetradecenoyl-CoA + oxidized [electron-transfer flavoprotein] + H(+) = (2E,5E)-tetradecadienoyl-CoA + reduced [electron-transfer flavoprotein]. It catalyses the reaction (5Z)-tetradecenoyl-CoA + oxidized [electron-transfer flavoprotein] + H(+) = (2E,5Z)-tetradecadienoyl-CoA + reduced [electron-transfer flavoprotein]. The enzyme catalyses oxidized [electron-transfer flavoprotein] + (9Z)-octadecenoyl-CoA + H(+) = (2E,9Z)-octadecadienoyl-CoA + reduced [electron-transfer flavoprotein]. Its pathway is lipid metabolism; mitochondrial fatty acid beta-oxidation. Functionally, long-chain specific acyl-CoA dehydrogenase is one of the acyl-CoA dehydrogenases that catalyze the first step of mitochondrial fatty acid beta-oxidation, an aerobic process breaking down fatty acids into acetyl-CoA and allowing the production of energy from fats. The first step of fatty acid beta-oxidation consists in the removal of one hydrogen from C-2 and C-3 of the straight-chain fatty acyl-CoA thioester, resulting in the formation of trans-2-enoyl-CoA. Among the different mitochondrial acyl-CoA dehydrogenases, long-chain specific acyl-CoA dehydrogenase can act on saturated and unsaturated acyl-CoAs with 6 to 24 carbons with a preference for 8 to 18 carbons long primary chains. This is Long-chain specific acyl-CoA dehydrogenase, mitochondrial from Mus musculus (Mouse).